Here is a 640-residue protein sequence, read N- to C-terminus: 1-deoxy-D-xylulose-5-phosphate synthase (640 aa).

Thiamine diphosphate contacts are provided by residues H78 and G119–S121. Position 151 (D151) interacts with Mg(2+). Thiamine diphosphate contacts are provided by residues G152–A153, N180, Y289, and E371. Residue N180 coordinates Mg(2+).

This sequence belongs to the transketolase family. DXPS subfamily. In terms of assembly, homodimer. It depends on Mg(2+) as a cofactor. Requires thiamine diphosphate as cofactor.

It catalyses the reaction D-glyceraldehyde 3-phosphate + pyruvate + H(+) = 1-deoxy-D-xylulose 5-phosphate + CO2. The protein operates within metabolic intermediate biosynthesis; 1-deoxy-D-xylulose 5-phosphate biosynthesis; 1-deoxy-D-xylulose 5-phosphate from D-glyceraldehyde 3-phosphate and pyruvate: step 1/1. Its function is as follows. Catalyzes the acyloin condensation reaction between C atoms 2 and 3 of pyruvate and glyceraldehyde 3-phosphate to yield 1-deoxy-D-xylulose-5-phosphate (DXP). This is 1-deoxy-D-xylulose-5-phosphate synthase from Bartonella henselae (strain ATCC 49882 / DSM 28221 / CCUG 30454 / Houston 1) (Rochalimaea henselae).